A 518-amino-acid chain; its full sequence is Macrophage receptor MARCO (518 aa).

The Cytoplasmic segment spans residues 1–48 (MGSKELLKEEDFLGSTEDRADFDQAMFPVMETFEINDPVPKKRNGGTF). A helical; Signal-anchor for type II membrane protein transmembrane segment spans residues 49–69 (CMAVMAIHLILLTAGTALLLI). Residues 70–518 (QVLNLQEQLQ…HNEDAGVECS (449 aa)) are Extracellular-facing. N-linked (GlcNAc...) asparagine glycosylation is found at N87 and N138. The segment at 147-426 (QIKGERGSPG…GESFQRVRIM (280 aa)) is disordered. The Collagen-like domain occupies 149 to 418 (KGERGSPGPK…QKGEKGQKGE (270 aa)). Residues 154–163 (SPGPKGAPGA) show a composition bias toward low complexity. Basic and acidic residues predominate over residues 239–250 (KGEHGTKGDKGD). Low complexity-rich tracts occupy residues 293-314 (PGVK…QGAP) and 325-344 (RTGL…PGIA). The segment covering 410 to 421 (KGEKGQKGESFQ) has biased composition (basic and acidic residues). In terms of domain architecture, SRCR spans 423-518 (VRIMGGTNRG…HNEDAGVECS (96 aa)). 3 disulfides stabilise this stretch: C446-C507, C459-C517, and C487-C497.

In terms of assembly, homotrimer; disulfide-linked. Trimers may assemble in larger oligomers thus resulting in the creation of a large surface capable of interacting with very large ligands. In terms of processing, N-glycosylated. Expressed in subpopulations of macrophages in the spleen and the medullary cord of lymph nodes (at protein level).

The protein localises to the cell membrane. Pattern recognition receptor (PRR) which binds Gram-positive and Gram-negative bacteria. Also plays a role in binding of unopsonized particles by alveolar macrophages. Binds to the secretoglobin SCGB3A2. The polypeptide is Macrophage receptor MARCO (Marco) (Mus musculus (Mouse)).